A 287-amino-acid polypeptide reads, in one-letter code: Formamidopyrimidine-DNA glycosylase (287 aa).

P2 acts as the Schiff-base intermediate with DNA in catalysis. Catalysis depends on E3, which acts as the Proton donor. Residue K58 is the Proton donor; for beta-elimination activity of the active site. Residues H104, R123, and R166 each contribute to the DNA site. The FPG-type zinc finger occupies 251 to 287 (RTYDREGQPCRNDGCRGVIGREVQAGRSTFYCPVCQR). Residue R277 is the Proton donor; for delta-elimination activity of the active site.

This sequence belongs to the FPG family. Monomer. The cofactor is Zn(2+).

The enzyme catalyses Hydrolysis of DNA containing ring-opened 7-methylguanine residues, releasing 2,6-diamino-4-hydroxy-5-(N-methyl)formamidopyrimidine.. It carries out the reaction 2'-deoxyribonucleotide-(2'-deoxyribose 5'-phosphate)-2'-deoxyribonucleotide-DNA = a 3'-end 2'-deoxyribonucleotide-(2,3-dehydro-2,3-deoxyribose 5'-phosphate)-DNA + a 5'-end 5'-phospho-2'-deoxyribonucleoside-DNA + H(+). In terms of biological role, involved in base excision repair of DNA damaged by oxidation or by mutagenic agents. Acts as a DNA glycosylase that recognizes and removes damaged bases. Has a preference for oxidized purines, such as 7,8-dihydro-8-oxoguanine (8-oxoG). Has AP (apurinic/apyrimidinic) lyase activity and introduces nicks in the DNA strand. Cleaves the DNA backbone by beta-delta elimination to generate a single-strand break at the site of the removed base with both 3'- and 5'-phosphates. The sequence is that of Formamidopyrimidine-DNA glycosylase from Phenylobacterium zucineum (strain HLK1).